Reading from the N-terminus, the 177-residue chain is uncharacterized protein (177 aa).

This is an uncharacterized protein from Azotobacter chroococcum mcd 1.